The sequence spans 372 residues: Cytochrome b (372 aa).

4 consecutive transmembrane segments (helical) span residues 25–45, 69–90, 105–125, and 170–190; these read FGSM…FLAI, WIMQ…YIHI, WVSG…GYVL, and FFAL…IHVM. Heme b-binding residues include histidine 75 and histidine 89. Heme b-binding residues include histidine 174 and histidine 188. An a ubiquinone-binding site is contributed by histidine 193. 4 helical membrane-spanning segments follow: residues 218–238, 280–300, 312–332, and 339–358; these read YKDT…TSFF, LGGT…PFTH, MAQV…WAAT, and FTTI…IINP.

This sequence belongs to the cytochrome b family. In terms of assembly, the cytochrome bc1 complex contains 3 respiratory subunits (MT-CYB, CYC1 and UQCRFS1), 2 core proteins (UQCRC1 and UQCRC2) and probably 6 low-molecular weight proteins. The cofactor is heme b.

The protein resides in the mitochondrion inner membrane. Functionally, component of the ubiquinol-cytochrome c reductase complex (complex III or cytochrome b-c1 complex) that is part of the mitochondrial respiratory chain. The b-c1 complex mediates electron transfer from ubiquinol to cytochrome c. Contributes to the generation of a proton gradient across the mitochondrial membrane that is then used for ATP synthesis. This Heterodon simus (Southern hognose snake) protein is Cytochrome b (MT-CYB).